Here is a 683-residue protein sequence, read N- to C-terminus: Glucosylceramidase (683 aa).

E254 acts as the Proton donor in catalysis. E483 functions as the Nucleophile in the catalytic mechanism.

It belongs to the glycosyl hydrolase 5 (cellulase A) family.

It is found in the membrane. The catalysed reaction is a beta-D-glucosyl-(1&lt;-&gt;1')-N-acylsphing-4-enine + H2O = an N-acylsphing-4-enine + D-glucose. Inhibited by metal cations Co(2+), Cu(2+), Ni(2+), Pb(2+) and Zn(2+). Not inhibited by metal chelator ethylenediaminetetraacetic acid (EDTA). Specifically hydrolyzes the glucosidic linkage in glucosylceramide. May prevent accumulation of aberrent glucosylceramide containing immature ceramide. This Rhizopus delemar (strain RA 99-880 / ATCC MYA-4621 / FGSC 9543 / NRRL 43880) (Mucormycosis agent) protein is Glucosylceramidase.